The sequence spans 483 residues: UDP-N-acetylmuramate--L-alanine ligase (483 aa).

128 to 134 (GTHGKTT) serves as a coordination point for ATP.

It belongs to the MurCDEF family.

It localises to the cytoplasm. It carries out the reaction UDP-N-acetyl-alpha-D-muramate + L-alanine + ATP = UDP-N-acetyl-alpha-D-muramoyl-L-alanine + ADP + phosphate + H(+). It participates in cell wall biogenesis; peptidoglycan biosynthesis. Cell wall formation. In Shewanella violacea (strain JCM 10179 / CIP 106290 / LMG 19151 / DSS12), this protein is UDP-N-acetylmuramate--L-alanine ligase.